The following is a 437-amino-acid chain: Neomycin resistance protein (437 aa).

Disordered regions lie at residues 161 to 285 (GQRG…EEEA) and 305 to 338 (VSGA…PVPD). Low complexity predominate over residues 203-229 (PPTGARSPGATAGARATASTSSSSVRS). The segment covering 324-338 (RRRHRGRRHGRPVPD) has biased composition (basic residues).

The protein belongs to the Gram-positive plasmids replication protein type 1 family.

The sequence is that of Neomycin resistance protein from Streptomyces cyanogenus.